The primary structure comprises 507 residues: Protein DETOXIFICATION 39 (507 aa).

12 helical membrane-spanning segments follow: residues 58-78 (VLFR…GMGI), 92-112 (LAAA…MLGM), 141-161 (IVLA…YPIL), 178-198 (IAGL…QKFL), 209-229 (FISA…VYVM), 233-253 (FMGI…SQCF), 287-307 (AVMI…AGLL), 318-338 (SICM…NAAV), 359-379 (WTAT…VIWF), 403-423 (FLAI…VAVG), 433-453 (VNVG…GFTF), and 459-479 (GIWT…LYVT).

The protein belongs to the multi antimicrobial extrusion (MATE) (TC 2.A.66.1) family.

The protein localises to the membrane. The protein is Protein DETOXIFICATION 39 of Arabidopsis thaliana (Mouse-ear cress).